Reading from the N-terminus, the 423-residue chain is Glucose-1-phosphate adenylyltransferase (423 aa).

Residues Tyr-98, Gly-163, Glu-178 to Lys-179, and Ser-189 each bind alpha-D-glucose 1-phosphate.

The protein belongs to the bacterial/plant glucose-1-phosphate adenylyltransferase family. In terms of assembly, homotetramer.

It catalyses the reaction alpha-D-glucose 1-phosphate + ATP + H(+) = ADP-alpha-D-glucose + diphosphate. Its pathway is glycan biosynthesis; glycogen biosynthesis. Involved in the biosynthesis of ADP-glucose, a building block required for the elongation reactions to produce glycogen. Catalyzes the reaction between ATP and alpha-D-glucose 1-phosphate (G1P) to produce pyrophosphate and ADP-Glc. In Thermotoga maritima (strain ATCC 43589 / DSM 3109 / JCM 10099 / NBRC 100826 / MSB8), this protein is Glucose-1-phosphate adenylyltransferase.